The sequence spans 184 residues: Probable chemoreceptor glutamine deamidase CheD (184 aa).

It belongs to the CheD family.

It carries out the reaction L-glutaminyl-[protein] + H2O = L-glutamyl-[protein] + NH4(+). Its function is as follows. Probably deamidates glutamine residues to glutamate on methyl-accepting chemotaxis receptors (MCPs), playing an important role in chemotaxis. The protein is Probable chemoreceptor glutamine deamidase CheD of Rhizobium leguminosarum bv. trifolii (strain WSM2304).